A 109-amino-acid polypeptide reads, in one-letter code: Ig kappa chain V region 3374 (109 aa).

The tract at residues 1 to 24 is framework-1; the sequence is ADIVMTQTPASVSAAVGGTVTINC. Residues 25-35 form a complementarity-determining-1 region; it reads QASQNIDSWLA. The segment at 36–50 is framework-2; the sequence is WYQQKPGQPPKVLIY. Residues 51–57 form a complementarity-determining-2 region; sequence RTSTLAS. The tract at residues 58-89 is framework-3; the sequence is GVPSRFKGSRSGTEFTLTISDLECADAATYYC. A complementarity-determining-3 region spans residues 90–98; it reads QSYYSISSA. The interval 99–108 is framework-4; sequence FGGGTEVVVK.

In Oryctolagus cuniculus (Rabbit), this protein is Ig kappa chain V region 3374.